The sequence spans 135 residues: Large ribosomal subunit protein bL21 (135 aa).

Residues 85–135 form a disordered region; it reads YRVKRGHRQQYTQIEIESLNANGPASSDDEEAAETSDAEPDEDPEAEPAEA. Over residues 93–107 the composition is skewed to polar residues; it reads QQYTQIEIESLNANG. The segment covering 111–135 has biased composition (acidic residues); the sequence is SDDEEAAETSDAEPDEDPEAEPAEA.

Belongs to the bacterial ribosomal protein bL21 family. Part of the 50S ribosomal subunit. Contacts protein L20.

This protein binds to 23S rRNA in the presence of protein L20. The protein is Large ribosomal subunit protein bL21 of Salinibacter ruber (strain DSM 13855 / M31).